Consider the following 497-residue polypeptide: Interferon regulatory factor 5 (497 aa).

Residues 12–18 carry the Nuclear localization signal motif; it reads PRRVRLK. A DNA-binding region (IRF tryptophan pentad repeat) is located at residues 14-122; sequence RVRLKPWLVA…QPYKIYEVCS (109 aa). The interval 124–178 is disordered; the sequence is GPAPTESQPTDDYVLGEEEEEEEEELQRMLPGLSITEPALPGPPNAPYSLPKEDT. Positions 137–148 are enriched in acidic residues; that stretch reads VLGEEEEEEEEE. Positions 149–159 match the Nuclear export signal motif; sequence LQRMLPGLSIT. The residue at position 157 (Ser157) is a Phosphoserine; by TBK1. Ser300 carries the post-translational modification Phosphoserine. Glycyl lysine isopeptide (Lys-Gly) (interchain with G-Cter in ubiquitin) cross-links involve residues Lys410 and Lys411. Position 430 is a phosphoserine (Ser430). Residue Ser434 is modified to Phosphoserine; by IKKB. Phosphoserine is present on residues Ser436 and Ser439. Phosphoserine; by IKKB is present on Ser445.

This sequence belongs to the IRF family. As to quaternary structure, homodimer, when phosphorylated. Interacts with TASL (via pLxIS motif); interaction takes place downstream of TLR7, TLR8 or TLR9, leading to its activation. Interacts with MYD88 and TRAF6. In terms of processing, phosphorylation of serine and threonine residues by IKBKB in a C-terminal autoinhibitory region, stimulates dimerization, transport into the nucleus, assembly with the coactivator CBP/EP300 and initiation of transcription. 'Lys-63'-linked polyubiquitination by TRAF6 is required for activation.

It localises to the cytoplasm. The protein resides in the nucleus. With respect to regulation, maintained as a monomer in an autoinhibited state. Phosphorylation and activation follow the following steps: innate adapter protein TASL recruits IRF5, thereby licensing IRF5 for phosphorylation by IKBKB. Phosphorylated IRF5 dissociates from the adapter proteins, dimerizes, and then enters the nucleus to induce IFNs. Transcription factor that plays a critical role in innate immunity by activating expression of type I interferon (IFN) IFNA and INFB and inflammatory cytokines downstream of endolysosomal toll-like receptors TLR7, TLR8 and TLR9. Regulates the transcription of type I IFN genes (IFN-alpha and IFN-beta) and IFN-stimulated genes (ISG) by binding to an interferon-stimulated response element (ISRE) in their promoters. Can efficiently activate both the IFN-beta (IFNB) and the IFN-alpha (IFNA) genes and mediate their induction downstream of the TLR-activated, MyD88-dependent pathway. The chain is Interferon regulatory factor 5 from Mus musculus (Mouse).